The primary structure comprises 917 residues: Calcium-activated chloride channel regulator 1 (917 aa).

Residues 1–21 (MGSFRSSLFILVLHLLEGAQS) form the signal peptide. Positions 46-199 (DERLIQNIKD…AIRGTNVLPQ (154 aa)) are metalloprotease domain. His156 lines the Zn(2+) pocket. Residue Glu157 is part of the active site. The Zn(2+) site is built by His160 and Asn167. Positions 306–475 (IVCLVLDKSG…NGLIDAFGAL (170 aa)) constitute a VWFA domain. N-linked (GlcNAc...) asparagine glycans are attached at residues Asn503, Asn772, Asn806, Asn812, Asn838, and Asn893.

The protein belongs to the CLCR family. Glycosylated. In terms of processing, the translation product is autoproteolytically cleaved by the metalloprotease domain in the endoplasmic reticulum into a N-terminal and a C-terminal products that remain physically associated with each other. The cleavage is necessary for calcium-activated chloride channel (CaCC) activation activity. Expressed in ileum, trachea, and the major salivary glands. In ileum, expressed to the crypt and villus epithelia, whereas in trachea expressed in both surface epithelium and submucosal glands.

The protein resides in the secreted. It is found in the extracellular space. Its function is as follows. May be involved in mediating calcium-activated chloride conductance. May play critical roles in goblet cell metaplasia, mucus hypersecretion, cystic fibrosis and AHR. May be involved in the regulation of mucus production and/or secretion by goblet cells. Involved in the regulation of tissue inflammation in the innate immune response. May play a role as a tumor suppressor. Induces MUC5AC. Induces a cAMP-dependent chloride conductance possibly through effects on CFTR in colon carcinoma cells. The sequence is that of Calcium-activated chloride channel regulator 1 (CLCA1) from Sus scrofa (Pig).